Here is a 121-residue protein sequence, read N- to C-terminus: Small ribosomal subunit protein uS13 (121 aa).

The segment at 92-121 (RKGLPVRGQSSKTNARTVKGPRKTVANKKK) is disordered. Over residues 110-121 (KGPRKTVANKKK) the composition is skewed to basic residues.

Belongs to the universal ribosomal protein uS13 family. In terms of assembly, part of the 30S ribosomal subunit. Forms a loose heterodimer with protein S19. Forms two bridges to the 50S subunit in the 70S ribosome.

Functionally, located at the top of the head of the 30S subunit, it contacts several helices of the 16S rRNA. In the 70S ribosome it contacts the 23S rRNA (bridge B1a) and protein L5 of the 50S subunit (bridge B1b), connecting the 2 subunits; these bridges are implicated in subunit movement. Contacts the tRNAs in the A and P-sites. The polypeptide is Small ribosomal subunit protein uS13 (Mycoplasma mycoides subsp. mycoides SC (strain CCUG 32753 / NCTC 10114 / PG1)).